The sequence spans 239 residues: Uridylate kinase (239 aa).

13–16 is a binding site for ATP; sequence KISG. Residue glycine 55 participates in UMP binding. Positions 56 and 60 each coordinate ATP. Residues aspartate 75 and 136 to 143 contribute to the UMP site; that span reads LGIPFFTT. ATP-binding residues include threonine 163, tyrosine 169, and aspartate 172.

The protein belongs to the UMP kinase family. In terms of assembly, homohexamer.

It is found in the cytoplasm. The catalysed reaction is UMP + ATP = UDP + ADP. It participates in pyrimidine metabolism; CTP biosynthesis via de novo pathway; UDP from UMP (UMPK route): step 1/1. With respect to regulation, inhibited by UTP. In terms of biological role, catalyzes the reversible phosphorylation of UMP to UDP. The sequence is that of Uridylate kinase from Buchnera aphidicola subsp. Cinara cedri (strain Cc).